The following is a 423-amino-acid chain: Histidine--tRNA ligase (423 aa).

Belongs to the class-II aminoacyl-tRNA synthetase family. In terms of assembly, homodimer.

Its subcellular location is the cytoplasm. It carries out the reaction tRNA(His) + L-histidine + ATP = L-histidyl-tRNA(His) + AMP + diphosphate + H(+). This chain is Histidine--tRNA ligase, found in Corynebacterium diphtheriae (strain ATCC 700971 / NCTC 13129 / Biotype gravis).